The sequence spans 318 residues: Glutathione synthetase (318 aa).

Residues 125–311 (EKLFTAWFPE…ITGKLMDAIE (187 aa)) enclose the ATP-grasp domain. 151–208 (FRQEHGDIILKPLDGMGGASIFRVKENDPNVSVIIETLTNHGQNYAMAQTFVPDISNG) is a binding site for ATP. Mg(2+)-binding residues include Glu282 and Asn284.

It belongs to the prokaryotic GSH synthase family. Mg(2+) serves as cofactor. The cofactor is Mn(2+).

It catalyses the reaction gamma-L-glutamyl-L-cysteine + glycine + ATP = glutathione + ADP + phosphate + H(+). The protein operates within sulfur metabolism; glutathione biosynthesis; glutathione from L-cysteine and L-glutamate: step 2/2. This Vibrio vulnificus (strain YJ016) protein is Glutathione synthetase.